The primary structure comprises 163 residues: Nodulin-13 (163 aa).

Positions 68 and 82 each coordinate kinetin. N(6)-dimethylallyladenine-binding residues include glutamine 68 and tyrosine 82. Positions 68, 82, and 133 each coordinate trans-zeatin.

The protein belongs to the BetVI family. As to quaternary structure, homodimer. In terms of tissue distribution, expressed in nodules, but not in leaves, stems, flowers and roots. Specifically located in the nodule cortex.

Functionally, may be involved in nodule organogenesis rather in the processes related to nitrogen fixation or interactions with the bacteria. May regulate nodulation by controlling the levels of freely available cytokinins. The sequence is that of Nodulin-13 (N13) from Medicago truncatula (Barrel medic).